The sequence spans 262 residues: NAD-dependent glucose-6-phosphate dehydrogenase (262 aa).

4 residues coordinate NAD(+): Asn90, Ser115, Tyr152, and Lys156. Tyr152 acts as the Proton acceptor in catalysis.

Belongs to the NAD(P)-dependent epimerase/dehydratase family. As to quaternary structure, homodimer.

The enzyme catalyses D-glucose 6-phosphate + NAD(+) = 6-phospho-D-glucono-1,5-lactone + NADH + H(+). Its pathway is carbohydrate degradation; pentose phosphate pathway. Its function is as follows. Catalyzes the NAD-dependent oxidation of glucose 6-phosphate to 6-phosphogluconolactone. This chain is NAD-dependent glucose-6-phosphate dehydrogenase, found in Haloferax volcanii (strain ATCC 29605 / DSM 3757 / JCM 8879 / NBRC 14742 / NCIMB 2012 / VKM B-1768 / DS2) (Halobacterium volcanii).